The following is a 289-amino-acid chain: Shikimate dehydrogenase (NADP(+)) (289 aa).

Shikimate contacts are provided by residues 22 to 24 and Thr69; that span reads SRS. Lys73 (proton acceptor) is an active-site residue. Glu85 provides a ligand contact to NADP(+). Shikimate is bound by residues Asn94 and Asp109. NADP(+) contacts are provided by residues 134 to 138, 158 to 163, and Ile226; these read GAGGA and NRTLSR. Shikimate is bound at residue Tyr228. An NADP(+)-binding site is contributed by Gly249.

Belongs to the shikimate dehydrogenase family. As to quaternary structure, homodimer.

It carries out the reaction shikimate + NADP(+) = 3-dehydroshikimate + NADPH + H(+). It participates in metabolic intermediate biosynthesis; chorismate biosynthesis; chorismate from D-erythrose 4-phosphate and phosphoenolpyruvate: step 4/7. In terms of biological role, involved in the biosynthesis of the chorismate, which leads to the biosynthesis of aromatic amino acids. Catalyzes the reversible NADPH linked reduction of 3-dehydroshikimate (DHSA) to yield shikimate (SA). In Brucella ovis (strain ATCC 25840 / 63/290 / NCTC 10512), this protein is Shikimate dehydrogenase (NADP(+)).